The chain runs to 361 residues: Protein-L-isoaspartate O-methyltransferase domain-containing protein 2 (361 aa).

Gly2 carries N-myristoyl glycine lipidation. The active site involves Ser64. 3 adoMet binding motif regions span residues 85 to 94, 160 to 164, and 181 to 191; these read LNLGSGTGYL, YDRVY, and LKVGGILVMPL. The tract at residues 240–250 is BC-box; that stretch reads VRSLQDLARIA. Over residues 303-312 the composition is skewed to polar residues; the sequence is SNPSDDNSSG. Positions 303-335 are disordered; that stretch reads SNPSDDNSSGDLEEERREEEATTPPDAKPEPPV. The interval 345–348 is CUL-box; sequence LPLP.

Belongs to the methyltransferase superfamily. L-isoaspartyl/D-aspartyl protein methyltransferase family.

It is found in the cytoplasm. Its function is as follows. May act as a substrate recognition component of an ECS (Elongin BC-CUL5-SOCS-box protein) E3 ubiquitin ligase complex which mediates the ubiquitination and subsequent proteasomal degradation of target proteins. May bind to the methyltransferase cofactor S-adenosylmethionine (AdoMet) via the N-terminal AdoMet binding motif, but probably does not display methyltransferase activity. The protein is Protein-L-isoaspartate O-methyltransferase domain-containing protein 2 (PCMTD2) of Bos taurus (Bovine).